The following is a 245-amino-acid chain: Ureidoacrylate amidohydrolase RutB (245 aa).

D41 (proton acceptor) is an active-site residue. Residue K150 is part of the active site. The active-site Nucleophile is the C183.

The protein belongs to the isochorismatase family. RutB subfamily.

The enzyme catalyses (Z)-3-ureidoacrylate + H2O + H(+) = (Z)-3-aminoacrylate + NH4(+) + CO2. It carries out the reaction (Z)-3-ureidoacrylate + H2O = (Z)-3-aminoacrylate + carbamate + H(+). It catalyses the reaction (Z)-2-methylureidoacrylate + H2O + H(+) = (Z)-2-methylaminoacrylate + NH4(+) + CO2. Its function is as follows. Hydrolyzes ureidoacrylate to form aminoacrylate and carbamate. The carbamate hydrolyzes spontaneously, thereby releasing one of the nitrogen atoms of the pyrimidine ring as ammonia and one of its carbon atoms as CO2. This Pseudomonas savastanoi pv. phaseolicola (strain 1448A / Race 6) (Pseudomonas syringae pv. phaseolicola (strain 1448A / Race 6)) protein is Ureidoacrylate amidohydrolase RutB.